A 473-amino-acid chain; its full sequence is Chromosomal replication initiator protein DnaA (473 aa).

The domain I, interacts with DnaA modulators stretch occupies residues 1–76; the sequence is MNYHSTNVNE…RTVLGRVIGP (76 aa). The tract at residues 76–135 is domain II; that stretch reads PNASLQYNALVDNSSPKYPGTVTLAGCADGGQAAEQFDVNLLHRHMPNAATHSEAQDFDT. The interval 136–353 is domain III, AAA+ region; sequence QLNSRLNFRN…GTLVSLITNS (218 aa). ATP is bound by residues Gly-181, Gly-183, Lys-184, and Thr-185. The tract at residues 354-473 is domain IV, binds dsDNA; it reads VVVGKEIDLT…VERAEQLIAN (120 aa).

Belongs to the DnaA family. As to quaternary structure, oligomerizes as a right-handed, spiral filament on DNA at oriC.

It localises to the cytoplasm. Functionally, plays an essential role in the initiation and regulation of chromosomal replication. ATP-DnaA binds to the origin of replication (oriC) to initiate formation of the DNA replication initiation complex once per cell cycle. Binds the DnaA box (a 9 base pair repeat at the origin) and separates the double-stranded (ds)DNA. Forms a right-handed helical filament on oriC DNA; dsDNA binds to the exterior of the filament while single-stranded (ss)DNA is stabiized in the filament's interior. The ATP-DnaA-oriC complex binds and stabilizes one strand of the AT-rich DNA unwinding element (DUE), permitting loading of DNA polymerase. After initiation quickly degrades to an ADP-DnaA complex that is not apt for DNA replication. Binds acidic phospholipids. This is Chromosomal replication initiator protein DnaA from Porphyromonas gingivalis (strain ATCC 33277 / DSM 20709 / CIP 103683 / JCM 12257 / NCTC 11834 / 2561).